The following is a 409-amino-acid chain: Short chain dehydrogenase sirS (409 aa).

NADP(+) is bound by residues Val-49, Leu-68, Lys-195, Val-288, Thr-290, and Ala-299. The interval 306 to 332 is disordered; that stretch reads GVGPEGAGEEEGKGEAEGGAKGATGWS.

Belongs to the short-chain dehydrogenases/reductases (SDR) family. Highly divergent.

Its pathway is mycotoxin biosynthesis. Short chain dehydrogenase; part of the gene cluster that mediates the biosynthesis of sirodesmin PL, an epipolythiodioxopiperazine (ETP) characterized by a disulfide bridged cyclic dipeptide and that acts as a phytotoxin which is involved in the blackleg didease of canola. SirD catalyzes the O-prenylation of L-tyrosine (L-Tyr) in the presence of dimethylallyl diphosphate (DMAPP) to yield 4-O-dimethylallyl-L-Tyr, and therefore represents probably the first pathway-specific enzyme in the biosynthesis of sirodesmin PL. 4-O-dimethylallyl-L-Tyr, then undergoes condensation with L-Ser in a reaction catalyzed by the non-ribosomal peptide synthase sirP to form the diketopiperazine (DKP) backbone. Further bishydroxylation of the DKP performed by the cytochrome P450 monooxygenase sirC leads to the production of the intermediate phomamide. This step is essential to form the reactive thiol group required for toxicity of sirodesmin PL. The next steps of sirodesmin biosynthesis are not well understood yet, but some predictions could be made from intermediate compounds identification. Phomamide is converted into phomalizarine via oxidation, probably by sirT. Further oxidation, methylation (by sirM or sirN) and reduction steps convert phomalizarine to deacetyl sirodesmin. Finally, acetyltransferase sirH probably acetylates deacetyl sirodesmin to produce sirodesmin PL. The sequence is that of Short chain dehydrogenase sirS from Leptosphaeria maculans (Blackleg fungus).